The chain runs to 140 residues: Putative transcription elongation factor S-II-like protein 349L (140 aa).

The TFIIS-type zinc-finger motif lies at 100-139 (GAIKCKCGSERVFSFSKQTRSGDESTSVFALCSSCKSKWV). Zn(2+) contacts are provided by cysteine 104, cysteine 106, cysteine 131, and cysteine 134.

Belongs to the IIV-6 349L family.

The chain is Putative transcription elongation factor S-II-like protein 349L from Acheta domesticus (House cricket).